Here is a 111-residue protein sequence, read N- to C-terminus: DNA-directed RNA polymerase subunit Rpo11 (111 aa).

Belongs to the archaeal Rpo11/eukaryotic RPB11/RPC19 RNA polymerase subunit family. Part of the RNA polymerase complex.

The protein resides in the cytoplasm. It catalyses the reaction RNA(n) + a ribonucleoside 5'-triphosphate = RNA(n+1) + diphosphate. DNA-dependent RNA polymerase (RNAP) catalyzes the transcription of DNA into RNA using the four ribonucleoside triphosphates as substrates. This chain is DNA-directed RNA polymerase subunit Rpo11, found in Thermoplasma acidophilum (strain ATCC 25905 / DSM 1728 / JCM 9062 / NBRC 15155 / AMRC-C165).